We begin with the raw amino-acid sequence, 254 residues long: Anti-sigma-M factor RsmA (254 aa).

Over Met-1 to Arg-112 the chain is Cytoplasmic. Residues Met-113 to Val-133 form a helical membrane-spanning segment. Residues Asp-134–Ala-254 lie on the Extracellular side of the membrane.

As to quaternary structure, interacts with ECF RNA polymerase sigma factor SigM; this should inhibit the interaction of SigM with the RNA polymerase catalytic core. In terms of processing, probably cleaved within the membrane by Rip1 near the cytoplasmic membrane interface.

The protein localises to the cell membrane. In terms of biological role, an anti-sigma factor for extracytoplasmic function (ECF) sigma factor SigM. ECF sigma factors are held in an inactive form by an anti-sigma factor until released by regulated intramembrane proteolysis (RIP). RIP occurs when an extracytoplasmic signal triggers a concerted proteolytic cascade to transmit information and elicit cellular responses. The membrane-spanning regulatory substrate protein is first cut extracytoplasmically (site-1 protease, S1P), then within the membrane itself (site-2 protease, S2P, Rip1), while cytoplasmic proteases finish degrading the regulatory protein, liberating the sigma factor. This chain is Anti-sigma-M factor RsmA (rsmA), found in Mycobacterium tuberculosis (strain ATCC 35801 / TMC 107 / Erdman).